The chain runs to 711 residues: Hydroperoxide isomerase ALOXE3 (711 aa).

The PLAT domain maps to 2 to 119 (AVYRLCVTTG…TVELRPGTAR (118 aa)). Residues 120 to 711 (TICQDSLPLL…PPLIENSVSI (592 aa)) enclose the Lipoxygenase domain. Fe cation contacts are provided by histidine 408, histidine 413, histidine 588, asparagine 592, and isoleucine 711.

Belongs to the lipoxygenase family. Fe cation is required as a cofactor. Predominantly expressed in skin.

Its subcellular location is the cytoplasm. The catalysed reaction is a hydroperoxyeicosatetraenoate = a hydroxy-epoxy-eicosatetraenoate. The enzyme catalyses (12R)-hydroperoxy-(5Z,8Z,10E,14Z)-eicosatetraenoate = (8R)-hydroxy-(11R,12R)-epoxy-(5Z,9E,14Z)-eicosatrienoate. It catalyses the reaction (12S)-hydroperoxy-(5Z,8Z,10E,14Z)-eicosatetraenoate = (8R)-hydroxy-(11S,12S)-epoxy-(5Z,9E,14Z)-eicosatrienoate. It carries out the reaction (12S)-hydroperoxy-(5Z,8Z,10E,14Z)-eicosatetraenoate = (10R)-hydroxy-(11S,12S)-epoxy-(5Z,8Z,14Z)-eicosatrienoate. The catalysed reaction is (15S)-hydroperoxy-(5Z,8Z,11Z,13E)-eicosatetraenoate = (13R)-hydroxy-(14S,15S)-epoxy-(5Z,8Z,11Z)-eicosatrienoate. The enzyme catalyses (5S)-hydroperoxy-(6E,8Z,11Z,14Z)-eicosatetraenoate = 7R-hydroxy-5S,6S-epoxy-(8Z,11Z,14Z)-eicosatrienoate. It catalyses the reaction (13S)-hydroperoxy-(9Z,11E)-octadecadienoate = 11-hydroxy-(12S,13S)-epoxy-(9Z)-octadecenoate. It carries out the reaction N-[omega-(9R)-hydroperoxy-(10E,12Z)-octadecadienoyloxy]acyl-beta-D-glucosyl-(1&lt;-&gt;1)-octadecasphing-4E-enine = a N-[omega-(9R,10R)-epoxy-(13R)-hydroxy-(11E)-octadecenoyloxy]acyl-beta-D-glucosyl-(1&lt;-&gt;1)-sphing-4E-enine. The catalysed reaction is a N-[omega-(9R)-hydroperoxy-(10E,12Z)-octadecadienoyloxy]-acylsphin-4E-enine = a N-[omega-(9R,10R)-epoxy-(13R)-hydroxy-(11E)-octadecenoyloxy]-acylsphing-4E-enine. The enzyme catalyses a hydroperoxyeicosatetraenoate = an oxoeicosatetraenoate + H2O. It catalyses the reaction (12R)-hydroperoxy-(5Z,8Z,10E,14Z)-eicosatetraenoate = 12-oxo-(5Z,8Z,10E,14Z)-eicosatetraenoate + H2O. It carries out the reaction (12S)-hydroperoxy-(5Z,8Z,10E,14Z)-eicosatetraenoate = 12-oxo-(5Z,8Z,10E,14Z)-eicosatetraenoate + H2O. The catalysed reaction is (15S)-hydroperoxy-(5Z,8Z,11Z,13E)-eicosatetraenoate = 15-oxo-(5Z,8Z,11Z,13E)-eicosatetraenoate + H2O. The enzyme catalyses (13S)-hydroperoxy-(9Z,11E)-octadecadienoate = 13-oxo-(9Z,11E)-octadecadienoate + H2O. It catalyses the reaction (8S)-hydroperoxy-(5Z,9E,11Z,14Z)-eicosatetraenoate = (10R)-hydroxy-(8S,9S)-epoxy-(5Z,11Z,14Z)-eicosatrienoate. It carries out the reaction (8R)-hydroperoxy-(5Z,9E,11Z,14Z)-eicosatetraenoate = 8-oxo-(5Z,9E,11Z,14Z)-eicosatetraenoate + H2O. The catalysed reaction is (8S)-hydroperoxy-(5Z,9E,11Z,14Z)-eicosatetraenoate = 8-oxo-(5Z,9E,11Z,14Z)-eicosatetraenoate + H2O. It functions in the pathway lipid metabolism; hydroperoxy eicosatetraenoic acid biosynthesis. Its pathway is lipid metabolism; sphingolipid metabolism. With respect to regulation, lipoxygenase activity is activated by 13(S)-HPODE leading to an active free ferric enzyme. The lipoxygenase and hydroperoxide isomerase activities are in competition and are reciprocally regulated by oxygen. The oxygen reacts with an epoxyallylic radical intermediate leading to an epoxyallylic peroxyl radical, which, due to its limited reactivity within the enzyme active site, it dissociates and leaves the enzyme in the activated free ferric state. Non-heme iron-containing lipoxygenase which is atypical in that it displays a prominent hydroperoxide isomerase activity and a reduced lipoxygenases activity. The hydroperoxide isomerase activity catalyzes the isomerization of hydroperoxides, derived from arachidonic and linoleic acid by ALOX12B, into hepoxilin-type epoxyalcohols and ketones. In presence of oxygen, oxygenates polyunsaturated fatty acids, including arachidonic acid, to produce fatty acid hydroperoxides. In the skin, acts downstream of ALOX12B on the linoleate moiety of esterified omega-hydroxyacyl-sphingosine (EOS) ceramides to produce an epoxy-ketone derivative, a crucial step in the conjugation of omega-hydroxyceramide to membrane proteins. Therefore plays a crucial role in the synthesis of corneocytes lipid envelope and the establishment of the skin barrier to water loss. In parallel, it may have a signaling function in barrier formation through the production of hepoxilins metabolites. Also plays a role in adipocyte differentiation through hepoxilin A3 and hepoxilin B3 production which in turn activate PPARG. Through the production of hepoxilins in the spinal cord, it may regulate inflammatory tactile allodynia. The polypeptide is Hydroperoxide isomerase ALOXE3 (Homo sapiens (Human)).